We begin with the raw amino-acid sequence, 200 residues long: Large ribosomal subunit protein uL4 (200 aa).

Residues 43-71 (RAQKTRAEVSGSGKKPWRQKGTGRARSGD) are disordered.

Belongs to the universal ribosomal protein uL4 family. Part of the 50S ribosomal subunit.

One of the primary rRNA binding proteins, this protein initially binds near the 5'-end of the 23S rRNA. It is important during the early stages of 50S assembly. It makes multiple contacts with different domains of the 23S rRNA in the assembled 50S subunit and ribosome. Its function is as follows. Forms part of the polypeptide exit tunnel. The chain is Large ribosomal subunit protein uL4 from Mannheimia succiniciproducens (strain KCTC 0769BP / MBEL55E).